A 55-amino-acid chain; its full sequence is MTHALPKVVKSQLVQDIGVALILGSIAGCFFKYGVDKKKQRERVAFYEKYDKEDL.

The helical transmembrane segment at 13 to 35 (LVQDIGVALILGSIAGCFFKYGV) threads the bilayer.

Slime mold cytochrome c oxidase consists of at least seven different polypeptides species, subunits I, II, III, IV, V, VI, and VIIe/s in order of MW.

The protein localises to the mitochondrion inner membrane. The catalysed reaction is 4 Fe(II)-[cytochrome c] + O2 + 8 H(+)(in) = 4 Fe(III)-[cytochrome c] + 2 H2O + 4 H(+)(out). In terms of biological role, this protein is one of the nuclear-coded polypeptide chains of cytochrome c oxidase, the terminal oxidase in mitochondrial electron transport. This chain is Cytochrome c oxidase subunit 7s (cxgS), found in Dictyostelium discoideum (Social amoeba).